The following is a 239-amino-acid chain: Ribosomal RNA small subunit methyltransferase G (239 aa).

Residues Gly76, Phe81, 99–101, 128–129, and Arg147 each bind S-adenosyl-L-methionine; these read DSS and IE.

This sequence belongs to the methyltransferase superfamily. RNA methyltransferase RsmG family.

It is found in the cytoplasm. In terms of biological role, specifically methylates the N7 position of a guanine in 16S rRNA. The protein is Ribosomal RNA small subunit methyltransferase G of Prochlorococcus marinus subsp. pastoris (strain CCMP1986 / NIES-2087 / MED4).